The chain runs to 261 residues: tRNA pseudouridine synthase A (261 aa).

The active-site Nucleophile is the Asp51. Tyr109 is a binding site for substrate.

The protein belongs to the tRNA pseudouridine synthase TruA family. As to quaternary structure, homodimer.

It catalyses the reaction uridine(38/39/40) in tRNA = pseudouridine(38/39/40) in tRNA. In terms of biological role, formation of pseudouridine at positions 38, 39 and 40 in the anticodon stem and loop of transfer RNAs. The sequence is that of tRNA pseudouridine synthase A from Shewanella baltica (strain OS155 / ATCC BAA-1091).